The primary structure comprises 300 residues: Tyrosine recombinase XerC (300 aa).

A Core-binding (CB) domain is found at 1–86; it reads MESVLDAFDQ…AVKTFTAWAV (86 aa). The Tyr recombinase domain maps to 107-294; sequence TLPAVLRQDQ…TVARLRAVHD (188 aa). Active-site residues include Arg-151, Lys-175, His-246, Arg-249, and His-272. The active-site O-(3'-phospho-DNA)-tyrosine intermediate is the Tyr-281.

It belongs to the 'phage' integrase family. XerC subfamily. In terms of assembly, forms a cyclic heterotetrameric complex composed of two molecules of XerC and two molecules of XerD.

It localises to the cytoplasm. In terms of biological role, site-specific tyrosine recombinase, which acts by catalyzing the cutting and rejoining of the recombining DNA molecules. The XerC-XerD complex is essential to convert dimers of the bacterial chromosome into monomers to permit their segregation at cell division. It also contributes to the segregational stability of plasmids. The chain is Tyrosine recombinase XerC from Mycobacterium sp. (strain KMS).